A 735-amino-acid chain; its full sequence is Photosystem I P700 chlorophyll a apoprotein A2 (735 aa).

Helical transmembrane passes span 46–69, 135–158, 176–200, 274–292, 329–352, 368–394, 416–438, and 521–539; these read IFAS…FYVS, LSTA…IHGY, LNHH…HVAI, IAHH…GHMY, LNLQ…QHMY, AALY…IFLV, VIIS…LYVH, and FLVH…LILV. Positions 563 and 572 each coordinate [4Fe-4S] cluster. The next 2 helical transmembrane spans lie at 579–600 and 647–669; these read AFYL…YWHW and LSVW…MFLI. 3 residues coordinate chlorophyll a: histidine 658, methionine 666, and tyrosine 674. Tryptophan 675 lines the phylloquinone pocket. Residues 708–728 traverse the membrane as a helical segment; it reads FVGLIHFTVGYILTYAAFLIA.

This sequence belongs to the PsaA/PsaB family. In terms of assembly, the PsaA/B heterodimer binds the P700 chlorophyll special pair and subsequent electron acceptors. PSI consists of a core antenna complex that captures photons, and an electron transfer chain that converts photonic excitation into a charge separation. The eukaryotic PSI reaction center is composed of at least 11 subunits. P700 is a chlorophyll a/chlorophyll a' dimer, A0 is one or more chlorophyll a, A1 is one or both phylloquinones and FX is a shared 4Fe-4S iron-sulfur center. is required as a cofactor.

It localises to the plastid. The protein resides in the chloroplast thylakoid membrane. The enzyme catalyses reduced [plastocyanin] + hnu + oxidized [2Fe-2S]-[ferredoxin] = oxidized [plastocyanin] + reduced [2Fe-2S]-[ferredoxin]. Its function is as follows. PsaA and PsaB bind P700, the primary electron donor of photosystem I (PSI), as well as the electron acceptors A0, A1 and FX. PSI is a plastocyanin/cytochrome c6-ferredoxin oxidoreductase, converting photonic excitation into a charge separation, which transfers an electron from the donor P700 chlorophyll pair to the spectroscopically characterized acceptors A0, A1, FX, FA and FB in turn. Oxidized P700 is reduced on the lumenal side of the thylakoid membrane by plastocyanin or cytochrome c6. This Bigelowiella natans (Pedinomonas minutissima) protein is Photosystem I P700 chlorophyll a apoprotein A2.